A 221-amino-acid polypeptide reads, in one-letter code: MLQNTVRCVSKLVQPITGVAAVRSKHSLPDLPYDYADLEPVISHEIMQLHHQKHHATYVNNLNQIEEKLHEAVSKGNVKEAIALQPALKFNGGGHINHSIFWTNLAKDGGEPSAELLTAIKSDFGSLDNLQKQLSASTVAVQGSGWGWLGYCPKGKILKVATCANQDPLEATTGLVPLFGIDVWEHAYYLQYKNVRPDYVNAIWKIANWKNVSERFAKAQQ.

The N-terminal 24 residues, 1–24 (MLQNTVRCVSKLVQPITGVAAVRS), are a transit peptide targeting the mitochondrion. Positions 50, 98, 182, and 186 each coordinate Mn(2+).

It belongs to the iron/manganese superoxide dismutase family. In terms of assembly, homotetramer. The cofactor is Mn(2+).

It is found in the mitochondrion matrix. The enzyme catalyses 2 superoxide + 2 H(+) = H2O2 + O2. In terms of biological role, destroys superoxide anion radicals which are normally produced within the cells and which are toxic to biological systems. This is Superoxide dismutase [Mn] 1, mitochondrial (sod-2) from Caenorhabditis elegans.